The chain runs to 495 residues: Glutamate--tRNA ligase 1 (495 aa).

The 'HIGH' region signature appears at 10-20 (PSPTGALHMGG). Positions 251–255 (KLSKR) match the 'KMSKS' region motif. Lysine 254 lines the ATP pocket.

Belongs to the class-I aminoacyl-tRNA synthetase family. Glutamate--tRNA ligase type 1 subfamily. In terms of assembly, monomer.

The protein resides in the cytoplasm. The catalysed reaction is tRNA(Glu) + L-glutamate + ATP = L-glutamyl-tRNA(Glu) + AMP + diphosphate. Catalyzes the attachment of glutamate to tRNA(Glu) in a two-step reaction: glutamate is first activated by ATP to form Glu-AMP and then transferred to the acceptor end of tRNA(Glu). The sequence is that of Glutamate--tRNA ligase 1 from Syntrophomonas wolfei subsp. wolfei (strain DSM 2245B / Goettingen).